The following is a 289-amino-acid chain: Bifunctional protein FolD (289 aa).

Residues 166–168 (GVS) and Ile-232 contribute to the NADP(+) site.

It belongs to the tetrahydrofolate dehydrogenase/cyclohydrolase family. As to quaternary structure, homodimer.

It carries out the reaction (6R)-5,10-methylene-5,6,7,8-tetrahydrofolate + NADP(+) = (6R)-5,10-methenyltetrahydrofolate + NADPH. The enzyme catalyses (6R)-5,10-methenyltetrahydrofolate + H2O = (6R)-10-formyltetrahydrofolate + H(+). It functions in the pathway one-carbon metabolism; tetrahydrofolate interconversion. Functionally, catalyzes the oxidation of 5,10-methylenetetrahydrofolate to 5,10-methenyltetrahydrofolate and then the hydrolysis of 5,10-methenyltetrahydrofolate to 10-formyltetrahydrofolate. The chain is Bifunctional protein FolD from Methylobacillus flagellatus (strain ATCC 51484 / DSM 6875 / VKM B-1610 / KT).